Reading from the N-terminus, the 317-residue chain is tRNA dimethylallyltransferase (317 aa).

Residue 14 to 21 (GPTAVGKT) participates in ATP binding. 16–21 (TAVGKT) contacts substrate. The interaction with substrate tRNA stretch occupies residues 39-42 (DSMQ).

Belongs to the IPP transferase family. Monomer. It depends on Mg(2+) as a cofactor.

It carries out the reaction adenosine(37) in tRNA + dimethylallyl diphosphate = N(6)-dimethylallyladenosine(37) in tRNA + diphosphate. In terms of biological role, catalyzes the transfer of a dimethylallyl group onto the adenine at position 37 in tRNAs that read codons beginning with uridine, leading to the formation of N6-(dimethylallyl)adenosine (i(6)A). This is tRNA dimethylallyltransferase from Bacillus cereus (strain ATCC 10987 / NRS 248).